Consider the following 760-residue polypeptide: Catecholate siderophore receptor Fiu (760 aa).

The signal sequence occupies residues 1-31; it reads MENNRNFPARQFHSLTFFAGLCIGITPVAQA. The TBDR plug domain maps to 67-175; that stretch reads PVADTTRTMT…PTGSINMISK (109 aa). In terms of domain architecture, TBDR beta-barrel spans 180 to 760; that stretch reads DSGIDASASI…TFLLTANMHF (581 aa). Positions 743–760 match the TonB C-terminal box motif; the sequence is RYHPGEPRTFLLTANMHF.

This sequence belongs to the TonB-dependent receptor family.

The protein localises to the cell outer membrane. Functionally, involved in the active transport across the outer membrane of iron complexed with catecholate siderophores such as dihydroxybenzoylserine and dihydroxybenzoate. It derives its energy for transport by interacting with the trans-periplasmic membrane protein TonB. Can also transport catechol-substituted cephalosporins. Receptor for microcins M, H47 and E492. The sequence is that of Catecholate siderophore receptor Fiu (fiu) from Escherichia coli (strain UTI89 / UPEC).